Consider the following 341-residue polypeptide: Elongation factor Ts (341 aa).

Positions threonine 80–valine 83 are involved in Mg(2+) ion dislocation from EF-Tu.

It belongs to the EF-Ts family.

It localises to the cytoplasm. Associates with the EF-Tu.GDP complex and induces the exchange of GDP to GTP. It remains bound to the aminoacyl-tRNA.EF-Tu.GTP complex up to the GTP hydrolysis stage on the ribosome. This Lactobacillus gasseri (strain ATCC 33323 / DSM 20243 / BCRC 14619 / CIP 102991 / JCM 1131 / KCTC 3163 / NCIMB 11718 / NCTC 13722 / AM63) protein is Elongation factor Ts.